A 251-amino-acid chain; its full sequence is Zinc import ATP-binding protein ZnuC (251 aa).

In terms of domain architecture, ABC transporter spans Val5–Arg220. ATP is bound at residue Gly37–Ser44.

Belongs to the ABC transporter superfamily. Zinc importer (TC 3.A.1.15.5) family. As to quaternary structure, the complex is composed of two ATP-binding proteins (ZnuC), two transmembrane proteins (ZnuB) and a solute-binding protein (ZnuA).

It is found in the cell inner membrane. It carries out the reaction Zn(2+)(out) + ATP(in) + H2O(in) = Zn(2+)(in) + ADP(in) + phosphate(in) + H(+)(in). Functionally, part of the ABC transporter complex ZnuABC involved in zinc import. Responsible for energy coupling to the transport system. This is Zinc import ATP-binding protein ZnuC from Shigella flexneri serotype 5b (strain 8401).